Here is a 251-residue protein sequence, read N- to C-terminus: NADPH-dependent oxidoreductase (251 aa).

This sequence belongs to the flavin oxidoreductase frp family. FMN serves as cofactor.

Reduces FMN, organic nitro compounds and disulfide DTNB. Involved in maintenance of the cellular redox state and the disulfide stress response. In Staphylococcus haemolyticus (strain JCSC1435), this protein is NADPH-dependent oxidoreductase (nfrA).